The primary structure comprises 446 residues: Exodeoxyribonuclease 7 large subunit (446 aa).

It belongs to the XseA family. Heterooligomer composed of large and small subunits.

Its subcellular location is the cytoplasm. The enzyme catalyses Exonucleolytic cleavage in either 5'- to 3'- or 3'- to 5'-direction to yield nucleoside 5'-phosphates.. Functionally, bidirectionally degrades single-stranded DNA into large acid-insoluble oligonucleotides, which are then degraded further into small acid-soluble oligonucleotides. The chain is Exodeoxyribonuclease 7 large subunit from Vibrio cholerae serotype O1 (strain ATCC 39541 / Classical Ogawa 395 / O395).